The following is a 691-amino-acid chain: Two-component response regulator ORR21 (691 aa).

The region spanning Lys-17–Ile-132 is the Response regulatory domain. The residue at position 68 (Asp-68) is a 4-aspartylphosphate. The span at Asn-139–Arg-155 shows a compositional bias: basic and acidic residues. Residues Asn-139 to Arg-204 form a disordered region. The segment at residues Thr-199–Lys-258 is a DNA-binding region (myb-like GARP).

Belongs to the ARR family. Type-B subfamily. Post-translationally, two-component system major event consists of a His-to-Asp phosphorelay between a sensor histidine kinase (HK) and a response regulator (RR). In plants, the His-to-Asp phosphorelay involves an additional intermediate named Histidine-containing phosphotransfer protein (HPt). This multistep phosphorelay consists of a His-Asp-His-Asp sequential transfer of a phosphate group between first a His and an Asp of the HK protein, followed by the transfer to a conserved His of the HPt protein and finally the transfer to an Asp in the receiver domain of the RR protein.

It is found in the nucleus. In terms of biological role, transcriptional activator that binds specific DNA sequence. Functions as a response regulator involved in His-to-Asp phosphorelay signal transduction system. Phosphorylation of the Asp residue in the receiver domain activates the ability of the protein to promote the transcription of target genes. May directly activate some type-A response regulators in response to cytokinins. In Oryza sativa subsp. japonica (Rice), this protein is Two-component response regulator ORR21.